We begin with the raw amino-acid sequence, 111 residues long: Ribosome-binding factor A (111 aa).

Belongs to the RbfA family. As to quaternary structure, monomer. Binds 30S ribosomal subunits, but not 50S ribosomal subunits or 70S ribosomes.

Its subcellular location is the cytoplasm. Its function is as follows. One of several proteins that assist in the late maturation steps of the functional core of the 30S ribosomal subunit. Associates with free 30S ribosomal subunits (but not with 30S subunits that are part of 70S ribosomes or polysomes). Required for efficient processing of 16S rRNA. May interact with the 5'-terminal helix region of 16S rRNA. This chain is Ribosome-binding factor A, found in Helicobacter pylori (strain Shi470).